A 339-amino-acid chain; its full sequence is Cathepsin B (339 aa).

Positions 1 to 17 are cleaved as a signal peptide; it reads MWQLWASLCCLLVLANA. Positions 18–79 are cleaved as a propeptide — activation peptide; the sequence is RSRPSFHPLS…QRVMFTEDLK (62 aa). Intrachain disulfides connect Cys93-Cys122, Cys105-Cys150, Cys141-Cys207, Cys142-Cys146, Cys179-Cys211, and Cys187-Cys198. Cys108 is an active-site residue. Asn192 is a glycosylation site (N-linked (GlcNAc...) asparagine). At Lys220 the chain carries N6-acetyllysine. Active-site residues include His278 and Asn298. A propeptide spanning residues 334 to 339 is cleaved from the precursor; sequence QYWEKI.

Belongs to the peptidase C1 family. As to quaternary structure, dimer of a heavy chain and a light chain cross-linked by a disulfide bond. Interacts with SRPX2. Directly interacts with SHKBP1. In terms of tissue distribution, expressed in the stratum spinosum of the epidermis. Weak expression is detected in the stratum granulosum.

It is found in the lysosome. It localises to the melanosome. Its subcellular location is the secreted. The protein resides in the extracellular space. The protein localises to the apical cell membrane. It catalyses the reaction Hydrolysis of proteins with broad specificity for peptide bonds. Preferentially cleaves -Arg-Arg-|-Xaa bonds in small molecule substrates (thus differing from cathepsin L). In addition to being an endopeptidase, shows peptidyl-dipeptidase activity, liberating C-terminal dipeptides.. Its activity is regulated as follows. Inhibited by leupeptin. Its function is as follows. Thiol protease which is believed to participate in intracellular degradation and turnover of proteins. Cleaves matrix extracellular phosphoglycoprotein MEPE. Involved in the solubilization of cross-linked TG/thyroglobulin in the thyroid follicle lumen. Has also been implicated in tumor invasion and metastasis. In Homo sapiens (Human), this protein is Cathepsin B (CTSB).